Consider the following 878-residue polypeptide: Leucine--tRNA ligase (878 aa).

Positions 56-66 match the 'HIGH' region motif; that stretch reads PYPSGKLHMGH. Residues 630-634 carry the 'KMSKS' region motif; sequence KMSKS. Lys633 provides a ligand contact to ATP.

This sequence belongs to the class-I aminoacyl-tRNA synthetase family.

The protein localises to the cytoplasm. It carries out the reaction tRNA(Leu) + L-leucine + ATP = L-leucyl-tRNA(Leu) + AMP + diphosphate. In Prochlorococcus marinus (strain MIT 9303), this protein is Leucine--tRNA ligase.